The sequence spans 338 residues: Anthranilate phosphoribosyltransferase (338 aa).

5-phospho-alpha-D-ribose 1-diphosphate-binding positions include glycine 78, 81-82 (GD), serine 86, 88-91 (NIST), 106-114 (KHGNKSVTS), and serine 118. Position 78 (glycine 78) interacts with anthranilate. Mg(2+) is bound at residue serine 90. Asparagine 109 serves as a coordination point for anthranilate. Anthranilate is bound at residue arginine 163. Residues aspartate 222 and glutamate 223 each contribute to the Mg(2+) site.

It belongs to the anthranilate phosphoribosyltransferase family. In terms of assembly, homodimer. Mg(2+) is required as a cofactor.

It catalyses the reaction N-(5-phospho-beta-D-ribosyl)anthranilate + diphosphate = 5-phospho-alpha-D-ribose 1-diphosphate + anthranilate. It participates in amino-acid biosynthesis; L-tryptophan biosynthesis; L-tryptophan from chorismate: step 2/5. Its function is as follows. Catalyzes the transfer of the phosphoribosyl group of 5-phosphorylribose-1-pyrophosphate (PRPP) to anthranilate to yield N-(5'-phosphoribosyl)-anthranilate (PRA). The sequence is that of Anthranilate phosphoribosyltransferase from Staphylococcus saprophyticus subsp. saprophyticus (strain ATCC 15305 / DSM 20229 / NCIMB 8711 / NCTC 7292 / S-41).